A 192-amino-acid chain; its full sequence is UPF0316 protein SSP0880 (192 aa).

The next 3 membrane-spanning stretches (helical) occupy residues 8 to 28, 40 to 60, and 66 to 86; these read PWLMVLAIFIINVAYVTCLTM, VAAIVSFLEVLVYVVGLGMVM, and IQNVFAYAFGFSIGIIVGMKI.

Belongs to the UPF0316 family.

Its subcellular location is the cell membrane. The chain is UPF0316 protein SSP0880 from Staphylococcus saprophyticus subsp. saprophyticus (strain ATCC 15305 / DSM 20229 / NCIMB 8711 / NCTC 7292 / S-41).